Consider the following 517-residue polypeptide: Protein disulfide-isomerase A5 (517 aa).

Residues 1–21 (MARAWGLLLAIGVILPTWLSS) form the signal peptide. Disulfide bonds link Cys83–Cys92, Cys180–Cys183, Cys303–Cys306, and Cys424–Cys427. 3 Thioredoxin domains span residues 132 to 259 (FLKD…NPQP), 268 to 382 (PWAD…NPEA), and 376 to 504 (WMQN…TLRE). A Prevents secretion from ER motif is present at residues 514–517 (REDL).

Belongs to the protein disulfide isomerase family.

The protein resides in the endoplasmic reticulum lumen. The catalysed reaction is Catalyzes the rearrangement of -S-S- bonds in proteins.. The protein is Protein disulfide-isomerase A5 (Pdia5) of Rattus norvegicus (Rat).